Reading from the N-terminus, the 267-residue chain is Thiamine thiazole synthase (267 aa).

NAD(+) is bound by residues S41, E60–R61, G68, V132, and H160–D162. D162 and H177 together coordinate Fe cation. An NAD(+)-binding site is contributed by M227. Position 237 (R237) interacts with glycine.

The protein belongs to the THI4 family. In terms of assembly, homooctamer; tetramer of dimers. It depends on Fe(2+) as a cofactor.

It catalyses the reaction hydrogen sulfide + glycine + NAD(+) = ADP-5-ethyl-4-methylthiazole-2-carboxylate + nicotinamide + 3 H2O + H(+). The protein operates within cofactor biosynthesis; thiamine diphosphate biosynthesis. Functionally, involved in the biosynthesis of the thiazole moiety of thiamine. Catalyzes the conversion of NAD and glycine to adenosine diphosphate 5-(2-hydroxyethyl)-4-methylthiazole-2-carboxylate (ADT), an adenylated thiazole intermediate, using free sulfide as a source of sulfur. The protein is Thiamine thiazole synthase of Saccharolobus islandicus (strain Y.N.15.51 / Yellowstone #2) (Sulfolobus islandicus).